Here is an 89-residue protein sequence, read N- to C-terminus: Small ribosomal subunit protein uS15 (89 aa).

Belongs to the universal ribosomal protein uS15 family. Part of the 30S ribosomal subunit. Forms a bridge to the 50S subunit in the 70S ribosome, contacting the 23S rRNA.

In terms of biological role, one of the primary rRNA binding proteins, it binds directly to 16S rRNA where it helps nucleate assembly of the platform of the 30S subunit by binding and bridging several RNA helices of the 16S rRNA. Its function is as follows. Forms an intersubunit bridge (bridge B4) with the 23S rRNA of the 50S subunit in the ribosome. This Pelotomaculum thermopropionicum (strain DSM 13744 / JCM 10971 / SI) protein is Small ribosomal subunit protein uS15.